Reading from the N-terminus, the 247-residue chain is MSTTVLFEHPLNEKMRTWLRIEFLLKQLSASQIIVDHQGALTFFRNAGELLDVFERGELRTEILKELERQQQKLLSWAEVPGVDMTQIEMHRAKLKGCATSLIAAPRMGQLLREERLISLVRQRLSIPGGCCSFDLPTLHIWLHIEQQLRDQQVAVWLDSLAPIRDALMLLLALIRQSGILRTHTSLNGFFQDNAEGADLLRLQLRLEDALYPQVSGHKSRYAIRFLPLDSERGEVPARFNFELACC.

Belongs to the ZapD family. Interacts with FtsZ.

It localises to the cytoplasm. Functionally, cell division factor that enhances FtsZ-ring assembly. Directly interacts with FtsZ and promotes bundling of FtsZ protofilaments, with a reduction in FtsZ GTPase activity. The protein is Cell division protein ZapD of Erwinia tasmaniensis (strain DSM 17950 / CFBP 7177 / CIP 109463 / NCPPB 4357 / Et1/99).